Here is a 292-residue protein sequence, read N- to C-terminus: 4-diphosphocytidyl-2-C-methyl-D-erythritol kinase (292 aa).

Lysine 11 is an active-site residue. 95 to 105 serves as a coordination point for ATP; the sequence is PVSAGLAGGSS. The active site involves aspartate 137.

This sequence belongs to the GHMP kinase family. IspE subfamily.

It carries out the reaction 4-CDP-2-C-methyl-D-erythritol + ATP = 4-CDP-2-C-methyl-D-erythritol 2-phosphate + ADP + H(+). It participates in isoprenoid biosynthesis; isopentenyl diphosphate biosynthesis via DXP pathway; isopentenyl diphosphate from 1-deoxy-D-xylulose 5-phosphate: step 3/6. Functionally, catalyzes the phosphorylation of the position 2 hydroxy group of 4-diphosphocytidyl-2C-methyl-D-erythritol. The protein is 4-diphosphocytidyl-2-C-methyl-D-erythritol kinase of Alkaliphilus oremlandii (strain OhILAs) (Clostridium oremlandii (strain OhILAs)).